A 105-amino-acid chain; its full sequence is MDGMIAMLPAPLQKLSSHIDFQGQKVAERTYQVILTIAGIIGFLVGFWTQQLSYAMFTVLGASAFTALIILPPWPFLFRKNPIVWHTPAEPQESGDKKKETKKTK.

Residues 1 to 32 (MDGMIAMLPAPLQKLSSHIDFQGQKVAERTYQ) are Cytoplasmic-facing. The helical transmembrane segment at 33 to 53 (VILTIAGIIGFLVGFWTQQLS) threads the bilayer. The Lumenal segment spans residues 54 to 56 (YAM). Residues 57 to 77 (FTVLGASAFTALIILPPWPFL) traverse the membrane as a helical segment. The Cytoplasmic segment spans residues 78 to 105 (FRKNPIVWHTPAEPQESGDKKKETKKTK).

Belongs to the SPCS1 family. In terms of assembly, component of the signal peptidase complex (SPC) composed of a catalytic subunit sec-11 and three accessory subunits spcs-1, spcs-2 and spcs-3. The complex induces a local thinning of the ER membrane which is used to measure the length of the signal peptide (SP) h-region of protein substrates. This ensures the selectivity of the complex towards h-regions shorter than 18-20 amino acids.

The protein localises to the endoplasmic reticulum membrane. Functionally, component of the signal peptidase complex (SPC) which catalyzes the cleavage of N-terminal signal sequences from nascent proteins as they are translocated into the lumen of the endoplasmic reticulum. Dispensable for SPC enzymatic activity. The chain is Signal peptidase complex subunit 1 from Caenorhabditis elegans.